Here is a 298-residue protein sequence, read N- to C-terminus: Phosphatidylserine decarboxylase proenzyme (298 aa).

Residues aspartate 113, histidine 169, and serine 256 each act as charge relay system; for autoendoproteolytic cleavage activity in the active site. Serine 256 (schiff-base intermediate with substrate; via pyruvic acid; for decarboxylase activity) is an active-site residue. Serine 256 is subject to Pyruvic acid (Ser); by autocatalysis.

This sequence belongs to the phosphatidylserine decarboxylase family. PSD-B subfamily. Prokaryotic type II sub-subfamily. In terms of assembly, heterodimer of a large membrane-associated beta subunit and a small pyruvoyl-containing alpha subunit. It depends on pyruvate as a cofactor. In terms of processing, is synthesized initially as an inactive proenzyme. Formation of the active enzyme involves a self-maturation process in which the active site pyruvoyl group is generated from an internal serine residue via an autocatalytic post-translational modification. Two non-identical subunits are generated from the proenzyme in this reaction, and the pyruvate is formed at the N-terminus of the alpha chain, which is derived from the carboxyl end of the proenzyme. The autoendoproteolytic cleavage occurs by a canonical serine protease mechanism, in which the side chain hydroxyl group of the serine supplies its oxygen atom to form the C-terminus of the beta chain, while the remainder of the serine residue undergoes an oxidative deamination to produce ammonia and the pyruvoyl prosthetic group on the alpha chain. During this reaction, the Ser that is part of the protease active site of the proenzyme becomes the pyruvoyl prosthetic group, which constitutes an essential element of the active site of the mature decarboxylase.

Its subcellular location is the cell membrane. It carries out the reaction a 1,2-diacyl-sn-glycero-3-phospho-L-serine + H(+) = a 1,2-diacyl-sn-glycero-3-phosphoethanolamine + CO2. The protein operates within phospholipid metabolism; phosphatidylethanolamine biosynthesis; phosphatidylethanolamine from CDP-diacylglycerol: step 2/2. Catalyzes the formation of phosphatidylethanolamine (PtdEtn) from phosphatidylserine (PtdSer). The sequence is that of Phosphatidylserine decarboxylase proenzyme from Desulfitobacterium hafniense (strain Y51).